The primary structure comprises 343 residues: Biotin synthase 2 (343 aa).

One can recognise a Radical SAM core domain in the interval Asn-58 to Arg-285. [4Fe-4S] cluster is bound by residues Cys-73, Cys-77, and Cys-80. Cys-117, Cys-148, Cys-208, and Arg-280 together coordinate [2Fe-2S] cluster.

Belongs to the radical SAM superfamily. Biotin synthase family. In terms of assembly, homodimer. Requires [4Fe-4S] cluster as cofactor. The cofactor is [2Fe-2S] cluster.

It catalyses the reaction (4R,5S)-dethiobiotin + (sulfur carrier)-SH + 2 reduced [2Fe-2S]-[ferredoxin] + 2 S-adenosyl-L-methionine = (sulfur carrier)-H + biotin + 2 5'-deoxyadenosine + 2 L-methionine + 2 oxidized [2Fe-2S]-[ferredoxin]. It functions in the pathway cofactor biosynthesis; biotin biosynthesis; biotin from 7,8-diaminononanoate: step 2/2. In terms of biological role, catalyzes the conversion of dethiobiotin (DTB) to biotin by the insertion of a sulfur atom into dethiobiotin via a radical-based mechanism. The polypeptide is Biotin synthase 2 (Polaromonas sp. (strain JS666 / ATCC BAA-500)).